Here is a 159-residue protein sequence, read N- to C-terminus: Globin CTT-W (159 aa).

The signal sequence occupies residues 1–16 (MKFLVILTLCIAGAIA). One can recognise a Globin domain in the interval 17–159 (HCDKAPFIKA…HHAIVYSILE (143 aa)). Histidine 73 and histidine 108 together coordinate heme b.

The protein belongs to the globin family.

This is Globin CTT-W (CTT-W) from Chironomus thummi piger (Midge).